A 379-amino-acid chain; its full sequence is MSMLSTLRTAGSLRTFSRSACYSFQRFSSTKAAAGTYEGVKNANGNYTVTMIAGDGIGPEIAQSVERIFKAAKVPIEWERVKVYPILKNGTTTIPDDAKESVRKNKVALKGPLATPIGKGHVSMNLTLRRTFGLFANVRPCVSITGYKTPYDNVNTVLIRENTEGEYSGIEHEVIPGVVQSIKLITRAASERVIRYAFQYARQTGKNNITVVHKATIMRMADGLFLECAKELAPEYPDIELREEILDNACLKIVTDPVPYNNTVMVMPNLYGDIVSDMCAGLIGGLGLTPSGNIGNQASIFEAVHGTAPDIAGKGLANPTALLLSSVMMLKHMNLNDYAKRIESAIFDTLANNPDARTKDLGGKSNNVQYTDAIISKLK.

A mitochondrion-targeting transit peptide spans 1 to 27 (MSMLSTLRTAGSLRTFSRSACYSFQRF). Arg-129, Arg-139, Arg-160, and Asp-247 together coordinate substrate. Mg(2+)-binding residues include Asp-247, Asp-273, and Asp-277.

Belongs to the isocitrate and isopropylmalate dehydrogenases family. Octamer of two non-identical subunits IDH1 and IDH2. Mg(2+) is required as a cofactor. Mn(2+) serves as cofactor.

The protein localises to the mitochondrion. The catalysed reaction is D-threo-isocitrate + NAD(+) = 2-oxoglutarate + CO2 + NADH. Its function is as follows. Performs an essential role in the oxidative function of the citric acid cycle and is involved in glutamate biosynthesis. Also binds RNA; specifically to the 5'-untranslated leaders of mitochondrial mRNAs. In Schizosaccharomyces pombe (strain 972 / ATCC 24843) (Fission yeast), this protein is Isocitrate dehydrogenase [NAD] subunit 2, mitochondrial (idh2).